Here is a 544-residue protein sequence, read N- to C-terminus: Fructose dehydrogenase large subunit (544 aa).

An FAD-binding site is contributed by 14–30 (GAGICGSLLAHKLVRNG). Catalysis depends on His478, which acts as the Proton acceptor.

Belongs to the GMC oxidoreductase family. Heterotrimer composed of FdhL, FdhS and FdhC. FAD is required as a cofactor.

It is found in the cell membrane. It carries out the reaction keto-D-fructose + a ubiquinone = 5-dehydro-D-fructose + a ubiquinol. Functionally, catalytic subunit of fructose dehydrogenase, an enzyme that catalyzes the oxidation of D-fructose to produce 5-keto-D-fructose. This is Fructose dehydrogenase large subunit (fdhL) from Gluconobacter japonicus.